Consider the following 370-residue polypeptide: Aspartate beta-hydroxylase domain-containing protein 2 (370 aa).

At 1–57 the chain is on the cytoplasmic side; that stretch reads MVWALPRTSSPSCIAPSYKPDSGWIKMSAEWLIDWSCLLNGLRDLIAGCIQAVRDCN. Residues 58-78 form a helical membrane-spanning segment; that stretch reads SFALTTVICLLMLFAWYCYRV. The Lumenal segment spans residues 79–370; it reads GKDQPRSPFA…ALDSIFAPGR (292 aa). Residue N212 is glycosylated (N-linked (GlcNAc...) asparagine). The 2-oxoglutarate site is built by W229 and S273. H284 is a Fe cation binding site. 293–295 contributes to the 2-oxoglutarate binding site; that stretch reads RCH. Fe cation is bound at residue H329. R342 contacts 2-oxoglutarate.

This sequence belongs to the aspartyl/asparaginyl beta-hydroxylase family. The cofactor is Fe cation.

It localises to the membrane. Its function is as follows. May function as 2-oxoglutarate-dependent dioxygenase. The chain is Aspartate beta-hydroxylase domain-containing protein 2 (asphd2) from Xenopus tropicalis (Western clawed frog).